The primary structure comprises 427 residues: MDAFRLAPCGPLRGRLRVPGDKSVTHRGLMLLALAEGEGRLFYPLKAGDTLSTARVLQALGAEVREEGPHFLVRGRGLRFKEPEDVLDCGNAGTLMRLLLGLLAGQEGLFAVLTGDASLRRRPMGRVVAPLRAMGARVDGREEGERAPLAVRGAPLRGLRYTLPVPSAQVKSALLLAGLFAEGVTEVEEPTPTRDHTERLFRHFGLPLEVEGRRVRTWRTGPFPAKDLVVPGDFSSAAFFLVAALVTPGSEVVVEGVGLNPTRTGLLTVLKAMGADLEWRVLEGEAGEPVGWVRARHSLLKGVAVDPGLIPLMVDEVPVLAAAAAWAEGETYIPGLSELRVKESDRVRAIAENLRALGVEVEEGPDWLRIRGGGVRPGRVRPFHDHRIAMAFAVVGLPVGVEVEEPHWAEISYPGFFQDLLRLCAAS.

Positions 22, 23, and 27 each coordinate 3-phosphoshikimate. Residue Lys22 participates in phosphoenolpyruvate binding. Positions 93 and 122 each coordinate phosphoenolpyruvate. 4 residues coordinate 3-phosphoshikimate: Ser167, Gln169, Asp315, and Lys342. Residue Gln169 participates in phosphoenolpyruvate binding. Asp315 serves as the catalytic Proton acceptor. Phosphoenolpyruvate-binding residues include Arg346 and Arg387.

This sequence belongs to the EPSP synthase family. In terms of assembly, monomer.

Its subcellular location is the cytoplasm. It carries out the reaction 3-phosphoshikimate + phosphoenolpyruvate = 5-O-(1-carboxyvinyl)-3-phosphoshikimate + phosphate. The protein operates within metabolic intermediate biosynthesis; chorismate biosynthesis; chorismate from D-erythrose 4-phosphate and phosphoenolpyruvate: step 6/7. In terms of biological role, catalyzes the transfer of the enolpyruvyl moiety of phosphoenolpyruvate (PEP) to the 5-hydroxyl of shikimate-3-phosphate (S3P) to produce enolpyruvyl shikimate-3-phosphate and inorganic phosphate. The protein is 3-phosphoshikimate 1-carboxyvinyltransferase of Thermus thermophilus (strain ATCC BAA-163 / DSM 7039 / HB27).